A 210-amino-acid polypeptide reads, in one-letter code: HTH-type transcriptional repressor FabR (210 aa).

The 61-residue stretch at 10 to 70 (KTRRSLVEAA…TMVDESGLML (61 aa)) folds into the HTH tetR-type domain. A DNA-binding region (H-T-H motif) is located at residues 33 to 52 (SLREVAREAGIAPTSFYRHF).

In terms of assembly, homodimer.

It localises to the cytoplasm. Functionally, represses the transcription of fabB, involved in unsaturated fatty acid (UFA) biosynthesis. By controlling UFA production, FabR directly influences the physical properties of the membrane bilayer. The protein is HTH-type transcriptional repressor FabR of Klebsiella pneumoniae subsp. pneumoniae (strain ATCC 700721 / MGH 78578).